The primary structure comprises 352 residues: RING finger protein 39 (352 aa).

The RING-type zinc finger occupies C20–G67. Residues P98–P118 form a disordered region. Residues E142–A352 form the B30.2/SPRY domain.

As to expression, expressed in the hippocampus. Expression is rapidly up-regulated in granule cells of the dentate gyrus after LTP induction.

The protein resides in the cytoplasm. The catalysed reaction is S-ubiquitinyl-[E2 ubiquitin-conjugating enzyme]-L-cysteine + [acceptor protein]-L-lysine = [E2 ubiquitin-conjugating enzyme]-L-cysteine + N(6)-ubiquitinyl-[acceptor protein]-L-lysine.. It participates in protein modification; protein ubiquitination. Plays an inhibitory role in anti-RNA viral innate immunity by targeting the adapter DDX3X and promoting its 'Lys-48'-linked polyubiquitination. Alternatively, enhances the cGAS-STING pathway activation by promoting 'Lys-63'-linked ubiquitination of STING1, facilitating the STING1-TBK1 complex formation and STING1 activation. The chain is RING finger protein 39 (Rnf39) from Rattus norvegicus (Rat).